The following is a 437-amino-acid chain: Adenylosuccinate synthetase (437 aa).

GTP-binding positions include 25-31, 53-55, and Lys62; these read GDEGKGK and GHT. Catalysis depends on Asp26, which acts as the Proton acceptor. Residues Asp26 and Gly53 each coordinate Mg(2+). IMP contacts are provided by residues 26–29 and 51–54; these read DEGK and NAGH. Residue His54 is the Proton donor of the active site. 4 residues coordinate IMP: Thr141, Arg155, Asn232, and Thr247. Thr307 contributes to the GTP binding site. Substrate is bound at residue 307–313; sequence TTTKRPR. Arg311 contributes to the IMP binding site. Residues Arg313, 339–341, and 425–427 contribute to the GTP site; these read KLD and GVG.

The protein belongs to the adenylosuccinate synthetase family. Homodimer. The cofactor is Mg(2+).

The protein resides in the cytoplasm. The catalysed reaction is IMP + L-aspartate + GTP = N(6)-(1,2-dicarboxyethyl)-AMP + GDP + phosphate + 2 H(+). It functions in the pathway purine metabolism; AMP biosynthesis via de novo pathway; AMP from IMP: step 1/2. Functionally, plays an important role in the salvage pathway for purine nucleotide biosynthesis. Catalyzes the first committed step in the biosynthesis of AMP from IMP. In Plasmodium knowlesi (strain H), this protein is Adenylosuccinate synthetase.